Consider the following 301-residue polypeptide: uncharacterized protein (301 aa).

A signal peptide spans 1–22 (MPGRFTVALVIALGGTCGVADA). The 270-residue stretch at 31–300 (PMIVAHRAGT…DSPLAAQQWR (270 aa)) folds into the GP-PDE domain.

This is an uncharacterized protein from Mycobacterium tuberculosis (strain ATCC 25618 / H37Rv).